Consider the following 238-residue polypeptide: MEEEFPTISLLGIDFNLSNILMITVTCVIVLLIAIICTRNLQRRPTGKQNFIEWVMDFVRGIINSNMDWKTGGRFHVLGITLLMFIFVANMLGLPFQIAINDEVWWRSPTADPIVTLTLAIMVLGLTHYYGIKMRGFKHYFVGTYFSPMKFLFPLKLVEEFANTLTLGLRLYGNIFAGEVLLTIIATQLAHMNIFVGVLAIIPALLWQGFSIFIGAIQAYIFTMLTMVYMSHKVSDEH.

4 helical membrane passes run 17–37, 80–100, 112–132, and 194–214; these read LSNI…AIIC, ITLL…QIAI, DPIV…YYGI, and IFVG…SIFI.

It belongs to the ATPase A chain family. As to quaternary structure, F-type ATPases have 2 components, CF(1) - the catalytic core - and CF(0) - the membrane proton channel. CF(1) has five subunits: alpha(3), beta(3), gamma(1), delta(1), epsilon(1). CF(0) has three main subunits: a(1), b(2) and c(9-12). The alpha and beta chains form an alternating ring which encloses part of the gamma chain. CF(1) is attached to CF(0) by a central stalk formed by the gamma and epsilon chains, while a peripheral stalk is formed by the delta and b chains.

The protein resides in the cell membrane. Functionally, key component of the proton channel; it plays a direct role in the translocation of protons across the membrane. The protein is ATP synthase subunit a of Listeria innocua serovar 6a (strain ATCC BAA-680 / CLIP 11262).